Consider the following 105-residue polypeptide: MSAAAVFRGLRPSPELLLLGLLLLPAVVAVTRASPEESDGDLSCVCVKTSSSRIHLKRITSLEVIKAGPHCAVPQLIATLKNGSKICLDRQVPLYKKIIKKLLES.

Positions 1–29 (MSAAAVFRGLRPSPELLLLGLLLLPAVVA) are cleaved as a signal peptide. O-linked (GalNAc...) threonine; partial glycosylation is present at Thr31. 2 disulfide bridges follow: Cys44–Cys71 and Cys46–Cys87. Ser61 is modified (phosphoserine). Residue 96-102 (KKIIKKL) participates in heparin binding.

This sequence belongs to the intercrine alpha (chemokine CxC) family. As to quaternary structure, homotetramer. Interacts with TNFAIP6 (via Link domain). Interacts with CCR1. Interacts with CXCR3. Interacts with THBD; this interaction enhances generation of activated protein C. O-linked glycan consists of Gal-GalNAc disaccharide which is modified with sialic acid residues (microheterogeneity).

The protein resides in the secreted. Chemokine released during platelet aggregation that plays a role in different biological processes including hematopoiesis, cell proliferation, differentiation, and activation. Acts via different functional receptors including CCR1, CXCR3A or CXCR3B. Upon interaction with CXCR3A receptor, induces activated T-lymphocytes migration mediated via downstream Ras/extracellular signal-regulated kinase (ERK) signaling. Neutralizes the anticoagulant effect of heparin by binding more strongly to heparin than to the chondroitin-4-sulfate chains of the carrier molecule. Plays a role in the inhibition of hematopoiesis and in the maintenance of hematopoietic stem cell (HSC) quiescence. Chemotactic for neutrophils and monocytes via CCR1. Inhibits endothelial cell proliferation. In cooperation with toll-like receptor 8/TLR8, induces chromatin remodeling and activates inflammatory gene expression via the TBK1-IRF5 axis. In addition, induces myofibroblast differentiation and collagen synthesis in different precursor cells, including endothelial cells, by stimulating endothelial-to-mesenchymal transition. Interacts with thrombomodulin/THBD to enhance the activation of protein C and thus potentiates its anticoagulant activity. The polypeptide is Platelet factor 4 (Pf4) (Rattus norvegicus (Rat)).